The sequence spans 241 residues: Probable transcriptional regulatory protein SAR11_0592 (241 aa).

The tract at residues 1–24 (MSGHSKWASIKHSKGKADKQRSKV) is disordered.

It belongs to the TACO1 family.

It localises to the cytoplasm. The polypeptide is Probable transcriptional regulatory protein SAR11_0592 (Pelagibacter ubique (strain HTCC1062)).